A 459-amino-acid chain; its full sequence is MPHNSIRSGHGGLNQLGGAFVNGRPLPEVVRQRIVDLAHQGVRPCDISRQLRVSHGCVSKILGRYYETGSIRPGVIGGSKPKVATPKVVEKIGDYKRQNPTMFAWEIRDRLLAEGVCDNDTVPSVSSINRIIRTKVQQPFNLPMDSCVATKSLSPGHTLIPSSAVTPPESPQSDSLGSTYSINGLLGIAQPGSDSKRKMDDSDQDSCRLSIDSQSSSSGPRKHLRTDAFSQHHLEPLECPFERQHYPEAYASPSHTKGEQGLYPLPLLNSAALDDGKATLTPSNTPLGRNLSTHQTYPVVADPHSPFAIKQETPEVSSSSSTPSSLSSSAFLDLQQVGGAGVPAGASVPPFNAFPHAASVYGQFTGQALLSGREMVGPTLPGYPPHIPTSGQGSYASSAIAGMVAGSEYSGNAYGHTPYSSYGEAWRFPNSSLLSSPYYYSSTSRPSAPPTTATAFDHL.

Residues 9-135 (GHGGLNQLGG…SSINRIIRTK (127 aa)) constitute a DNA-binding region (paired). The interval 12–68 (GLNQLGGAFVNGRPLPEVVRQRIVDLAHQGVRPCDISRQLRVSHGCVSKILGRYYET) is PAI subdomain. The tract at residues 87-135 (KVVEKIGDYKRQNPTMFAWEIRDRLLAEGVCDNDTVPSVSSINRIIRTK) is RED subdomain. Polar residues predominate over residues 159-182 (LIPSSAVTPPESPQSDSLGSTYSI). A disordered region spans residues 159–223 (LIPSSAVTPP…QSSSSGPRKH (65 aa)). The residue at position 305 (S305) is a Phosphoserine.

In terms of assembly, interacts with WWTR1.

Its subcellular location is the nucleus. Thought to encode a transcription factor. It may have a role in kidney cell differentiation. May play a regulatory role in mammalian development. The chain is Paired box protein Pax-8 (PAX8) from Canis lupus familiaris (Dog).